A 91-amino-acid chain; its full sequence is ATP synthase subunit c (91 aa).

The next 2 helical transmembrane spans lie at 4 to 24 (LTMC…GTGI) and 53 to 73 (IGLA…LIIL).

The protein belongs to the ATPase C chain family. As to quaternary structure, F-type ATPases have 2 components, F(1) - the catalytic core - and F(0) - the membrane proton channel. F(1) has five subunits: alpha(3), beta(3), gamma(1), delta(1), epsilon(1). F(0) has three main subunits: a(1), b(2) and c(10-14). The alpha and beta chains form an alternating ring which encloses part of the gamma chain. F(1) is attached to F(0) by a central stalk formed by the gamma and epsilon chains, while a peripheral stalk is formed by the delta and b chains.

It localises to the cell inner membrane. Functionally, f(1)F(0) ATP synthase produces ATP from ADP in the presence of a proton or sodium gradient. F-type ATPases consist of two structural domains, F(1) containing the extramembraneous catalytic core and F(0) containing the membrane proton channel, linked together by a central stalk and a peripheral stalk. During catalysis, ATP synthesis in the catalytic domain of F(1) is coupled via a rotary mechanism of the central stalk subunits to proton translocation. In terms of biological role, key component of the F(0) channel; it plays a direct role in translocation across the membrane. A homomeric c-ring of between 10-14 subunits forms the central stalk rotor element with the F(1) delta and epsilon subunits. The protein is ATP synthase subunit c of Geobacter metallireducens (strain ATCC 53774 / DSM 7210 / GS-15).